Reading from the N-terminus, the 379-residue chain is UDP-4-amino-4-deoxy-L-arabinose--oxoglutarate aminotransferase (379 aa).

N6-(pyridoxal phosphate)lysine is present on Lys182.

It belongs to the DegT/DnrJ/EryC1 family. ArnB subfamily. Homodimer. It depends on pyridoxal 5'-phosphate as a cofactor.

The catalysed reaction is UDP-4-amino-4-deoxy-beta-L-arabinose + 2-oxoglutarate = UDP-beta-L-threo-pentopyranos-4-ulose + L-glutamate. Its pathway is nucleotide-sugar biosynthesis; UDP-4-deoxy-4-formamido-beta-L-arabinose biosynthesis; UDP-4-deoxy-4-formamido-beta-L-arabinose from UDP-alpha-D-glucuronate: step 2/3. The protein operates within bacterial outer membrane biogenesis; lipopolysaccharide biosynthesis. Its function is as follows. Catalyzes the conversion of UDP-4-keto-arabinose (UDP-Ara4O) to UDP-4-amino-4-deoxy-L-arabinose (UDP-L-Ara4N). The modified arabinose is attached to lipid A and is required for resistance to polymyxin and cationic antimicrobial peptides. The sequence is that of UDP-4-amino-4-deoxy-L-arabinose--oxoglutarate aminotransferase from Klebsiella pneumoniae (strain 342).